The sequence spans 548 residues: Pentatricopeptide repeat-containing protein At5g15300 (548 aa).

PPR repeat units lie at residues 76-110 (DVSICNHVLRGSAQSMKPEKTVSLYTEMEKRGVSP), 111-145 (DRYTFTFVLKACSKLEWRSNGFAFHGKVVRHGFVL), 146-176 (NEYVKNALILFHANCGDLGIASELFDDSAKA), 177-211 (HKVAWSSMTSGYAKRGKIDEAMRLFDEMPYKDQVA), 212-238 (WNVMITGCLKCKEMDSARELFDRFTEK), 239-273 (DVVTWNAMISGYVNCGYPKEALGIFKEMRDAGEHP), 274-308 (DVVTILSLLSACAVLGDLETGKRLHIYILETASVS), 314-348 (GTPIWNALIDMYAKCGSIDRAIEVFRGVKDRDLST), 349-378 (WNTLIVGLALHHAEGSIEMFEEMQRLKVWP), 379-409 (NEVTFIGVILACSHSGRVDEGRKYFSLMRDM), and 415-445 (NIKHYGCMVDMLGRAGQLEEAFMFVESMKIE). Residues 450 to 525 (VWRTLLGACK…PTGVSLIEED (76 aa)) are type E motif.

Belongs to the PPR family. PCMP-E subfamily.

In Arabidopsis thaliana (Mouse-ear cress), this protein is Pentatricopeptide repeat-containing protein At5g15300 (PCMP-E40).